Consider the following 246-residue polypeptide: 1-(5-phosphoribosyl)-5-[(5-phosphoribosylamino)methylideneamino] imidazole-4-carboxamide isomerase (246 aa).

The active-site Proton acceptor is aspartate 12. Aspartate 134 (proton donor) is an active-site residue.

This sequence belongs to the HisA/HisF family.

The protein localises to the cytoplasm. The catalysed reaction is 1-(5-phospho-beta-D-ribosyl)-5-[(5-phospho-beta-D-ribosylamino)methylideneamino]imidazole-4-carboxamide = 5-[(5-phospho-1-deoxy-D-ribulos-1-ylimino)methylamino]-1-(5-phospho-beta-D-ribosyl)imidazole-4-carboxamide. It participates in amino-acid biosynthesis; L-histidine biosynthesis; L-histidine from 5-phospho-alpha-D-ribose 1-diphosphate: step 4/9. The chain is 1-(5-phosphoribosyl)-5-[(5-phosphoribosylamino)methylideneamino] imidazole-4-carboxamide isomerase from Haloarcula marismortui (strain ATCC 43049 / DSM 3752 / JCM 8966 / VKM B-1809) (Halobacterium marismortui).